The primary structure comprises 450 residues: Saccharopine dehydrogenase [NADP(+), L-glutamate-forming] (450 aa).

Residues 11-14 (SGFV), 33-35 (CRT), 55-56 (DV), isoleucine 76, 98-99 (TS), 125-127 (LDP), and serine 175 each bind NADP(+). Residues 99–100 (SY) and aspartate 126 each bind L-saccharopine. Residues arginine 224 and 245-247 (TLR) each bind L-saccharopine.

Belongs to the saccharopine dehydrogenase family. In terms of assembly, homodimer.

It carries out the reaction L-saccharopine + NADP(+) + H2O = (S)-2-amino-6-oxohexanoate + L-glutamate + NADPH + H(+). The protein operates within amino-acid biosynthesis; L-lysine biosynthesis via AAA pathway; L-lysine from L-alpha-aminoadipate (fungal route): step 2/3. This chain is Saccharopine dehydrogenase [NADP(+), L-glutamate-forming] (LYS3), found in Pyricularia oryzae (strain 70-15 / ATCC MYA-4617 / FGSC 8958) (Rice blast fungus).